The following is a 645-amino-acid chain: Matrix metalloproteinase-24 (645 aa).

Positions 1-10 (MPRSRGGRAA) are enriched in low complexity. Positions 1-26 (MPRSRGGRAAPGPPPPPPPPGQAPRW) are disordered. Positions 1–52 (MPRSRGGRAAPGPPPPPPPPGQAPRWSRWRVPGRLLLLLLPALCCLPGAARA) are cleaved as a signal peptide. Residues 11 to 22 (PGPPPPPPPPGQ) are compositionally biased toward pro residues. A propeptide spanning residues 53–155 (AAAAAGAGNR…HLSRRRRNKR (103 aa)) is cleaved from the precursor. Over 53 to 602 (AAAAAGAGNR…INDVPGSVNA (550 aa)) the chain is Extracellular. A Cysteine switch motif is present at residues 137–144 (PRCGVPDH). 2 residues coordinate Zn(2+): Cys139 and His282. Residue Glu283 is part of the active site. Zn(2+) is bound by residues His286 and His292. The interval 323–380 (QKIYGPPAEPLEPTRPLPTLPVRRIHSPSERKHERQPRPPRPPLGDRPSTPGTKPNIC) is disordered. Over residues 329 to 341 (PAEPLEPTRPLPT) the composition is skewed to pro residues. The span at 349–359 (SPSERKHERQP) shows a compositional bias: basic and acidic residues. Hemopexin repeat units lie at residues 377–425 (PNIC…WKGL), 426–471 (PARI…GSCL), 473–521 (REGI…KGIP), and 522–569 (QAPQ…WMGC). A disulfide bond links Cys380 and Cys569. Residues 603 to 623 (VAVVIPCILSLCILVLVYTIF) traverse the membrane as a helical segment. Topologically, residues 624-645 (QFKNKTGPQPVTYYKRPVQEWV) are cytoplasmic. A PDZ-binding motif is present at residues 643–645 (EWV).

The protein belongs to the peptidase M10A family. As to quaternary structure, interacts (via PDZ-binding motif) with APBA3 (via PDZ domain). Interacts with GRIP1 and GRIP2. It depends on Zn(2+) as a cofactor. Ca(2+) is required as a cofactor. Cleaved by a furin endopeptidase in the trans-Golgi network. As to expression, predominantly expressed in brain, kidney, pancreas and lung. Overexpressed in a series of brain tumors, including astrocytomas and glioblastomas.

Its subcellular location is the cell membrane. The protein localises to the golgi apparatus. It is found in the trans-Golgi network membrane. It localises to the secreted. The protein resides in the extracellular space. Its subcellular location is the extracellular matrix. Its function is as follows. Metalloprotease that mediates cleavage of N-cadherin (CDH2) and acts as a regulator of neuro-immune interactions and neural stem cell quiescence. Involved in cell-cell interactions between nociceptive neurites and mast cells, possibly by mediating cleavage of CDH2, thereby acting as a mediator of peripheral thermal nociception and inflammatory hyperalgesia. Key regulator of neural stem cells quiescence by mediating cleavage of CDH2, affecting CDH2-mediated anchorage of neural stem cells to ependymocytes in the adult subependymal zone, leading to modulate their quiescence. May play a role in axonal growth. Able to activate progelatinase A. May also be a proteoglycanase involved in degradation of proteoglycans, such as dermatan sulfate and chondroitin sulfate proteoglycans. Cleaves partially fibronectin, but not collagen type I, nor laminin. The chain is Matrix metalloproteinase-24 (MMP24) from Homo sapiens (Human).